The primary structure comprises 137 residues: ATP synthase epsilon chain (137 aa).

Belongs to the ATPase epsilon chain family. In terms of assembly, F-type ATPases have 2 components, CF(1) - the catalytic core - and CF(0) - the membrane proton channel. CF(1) has five subunits: alpha(3), beta(3), gamma(1), delta(1), epsilon(1). CF(0) has three main subunits: a, b and c.

It localises to the cell membrane. Its function is as follows. Produces ATP from ADP in the presence of a proton gradient across the membrane. The chain is ATP synthase epsilon chain from Streptococcus agalactiae serotype III (strain NEM316).